Here is a 548-residue protein sequence, read N- to C-terminus: Glucose-6-phosphate isomerase (548 aa).

Glutamate 355 serves as the catalytic Proton donor. Active-site residues include histidine 386 and lysine 514.

Belongs to the GPI family.

It is found in the cytoplasm. It catalyses the reaction alpha-D-glucose 6-phosphate = beta-D-fructose 6-phosphate. The protein operates within carbohydrate biosynthesis; gluconeogenesis. It functions in the pathway carbohydrate degradation; glycolysis; D-glyceraldehyde 3-phosphate and glycerone phosphate from D-glucose: step 2/4. Functionally, catalyzes the reversible isomerization of glucose-6-phosphate to fructose-6-phosphate. This chain is Glucose-6-phosphate isomerase, found in Yersinia pestis (strain Pestoides F).